The sequence spans 311 residues: Ketoisovalerate oxidoreductase subunit VorB (311 aa).

As to quaternary structure, heterotetramer of one alpha, one beta, one delta and one gamma chain.

The catalysed reaction is 3-methyl-2-oxobutanoate + 2 oxidized [2Fe-2S]-[ferredoxin] + CoA = 2-methylpropanoyl-CoA + 2 reduced [2Fe-2S]-[ferredoxin] + CO2 + H(+). In Pyrococcus horikoshii (strain ATCC 700860 / DSM 12428 / JCM 9974 / NBRC 100139 / OT-3), this protein is Ketoisovalerate oxidoreductase subunit VorB (vorB).